The following is a 748-amino-acid chain: Adenosylcobalamin-dependent ribonucleoside-triphosphate reductase (748 aa).

Residues Cys123 and Cys426 are joined by a disulfide bond. Positions 151–162 (SMPYSFMFDELM) are effector region-1. The segment at 172–320 (TKDNIAKLPP…IGNLIGKTVV (149 aa)) is effector region-2. Residues Cys415 and Glu417 contribute to the active site. The interval 572–633 (FHYAGYLIQR…DPAFASAGTV (62 aa)) is adenosylcobalamin-binding-1. The tract at residues 692-733 (FKQAPKEPIDVKTYKQKCAAIHGSVAAVFAVQNADHDQKDLE) is adenosylcobalamin-binding-2.

It belongs to the class II ribonucleoside-triphosphate reductase family. Monomer. It depends on adenosylcob(III)alamin as a cofactor.

The catalysed reaction is a 2'-deoxyribonucleoside 5'-triphosphate + [thioredoxin]-disulfide + H2O = a ribonucleoside 5'-triphosphate + [thioredoxin]-dithiol. Allosterically regulated by ATP and dNTP. The sequence is that of Adenosylcobalamin-dependent ribonucleoside-triphosphate reductase (rtpR) from Lacticaseibacillus paracasei (strain ATCC 334 / BCRC 17002 / CCUG 31169 / CIP 107868 / KCTC 3260 / NRRL B-441) (Lactobacillus paracasei).